Here is a 109-residue protein sequence, read N- to C-terminus: MIKLKVKKGDEVIVITGKYKGKKGKILKVFPEQNKIVVSGINLVKKHTKPTKVSEGGIITKELPIDISNVAHVDPKTGNPTKVAFKFLEDGSKVRIAKKSGEIIGKEGK.

Belongs to the universal ribosomal protein uL24 family. In terms of assembly, part of the 50S ribosomal subunit.

Its function is as follows. One of two assembly initiator proteins, it binds directly to the 5'-end of the 23S rRNA, where it nucleates assembly of the 50S subunit. One of the proteins that surrounds the polypeptide exit tunnel on the outside of the subunit. The protein is Large ribosomal subunit protein uL24 of Rickettsia bellii (strain RML369-C).